A 73-amino-acid polypeptide reads, in one-letter code: Putative beta-defensin 108A (73 aa).

Positions 1-22 (MRIAVLFFTIFFFMSQVLPAKG) are cleaved as a signal peptide. 3 cysteine pairs are disulfide-bonded: cysteine 28–cysteine 55, cysteine 35–cysteine 49, and cysteine 39–cysteine 56.

Belongs to the beta-defensin family.

Its subcellular location is the secreted. Its function is as follows. Has antibacterial activity. The protein is Putative beta-defensin 108A of Homo sapiens (Human).